Here is a 244-residue protein sequence, read N- to C-terminus: MKNVKLTLEYDGTNYCGWQKQKNVVTVQEEVEKIIGEITGEKIDVIGCSRTDSGVHAKAYTCNFKTNTVIPPEKFYLVLNSVLPDDIVALNSEEVPMDFHSRFDNKGKTYSYTILNRLQRAAIDRNYVYQYGHKLNCDLMREATKYILGTHDFTSFKSTGSKVKSNIRTIYEARIVEDENKVIFYVTGDGFLYNMVRIIVGTLLEVGEEKITPLNVKTIVESKDRTKAGRVVPAKGLCLEKVMY.

Residue aspartate 52 is the Nucleophile of the active site. Tyrosine 110 serves as a coordination point for substrate.

This sequence belongs to the tRNA pseudouridine synthase TruA family. In terms of assembly, homodimer.

The catalysed reaction is uridine(38/39/40) in tRNA = pseudouridine(38/39/40) in tRNA. Formation of pseudouridine at positions 38, 39 and 40 in the anticodon stem and loop of transfer RNAs. The sequence is that of tRNA pseudouridine synthase A from Clostridium acetobutylicum (strain ATCC 824 / DSM 792 / JCM 1419 / IAM 19013 / LMG 5710 / NBRC 13948 / NRRL B-527 / VKM B-1787 / 2291 / W).